We begin with the raw amino-acid sequence, 187 residues long: Ribosome-recycling factor (187 aa).

This sequence belongs to the RRF family.

The protein resides in the cytoplasm. Its function is as follows. Responsible for the release of ribosomes from messenger RNA at the termination of protein biosynthesis. May increase the efficiency of translation by recycling ribosomes from one round of translation to another. This chain is Ribosome-recycling factor, found in Xanthobacter autotrophicus (strain ATCC BAA-1158 / Py2).